The primary structure comprises 312 residues: Putative endonuclease 4 (312 aa).

Zn(2+) contacts are provided by His-84, His-127, Glu-166, Asp-202, His-205, His-239, Asp-252, His-254, and Glu-284.

This sequence belongs to the AP endonuclease 2 family. The cofactor is Zn(2+).

The enzyme catalyses Endonucleolytic cleavage to 5'-phosphooligonucleotide end-products.. Functionally, endonuclease IV plays a role in DNA repair. It cleaves phosphodiester bonds at apurinic or apyrimidinic sites (AP sites) to produce new 5'-ends that are base-free deoxyribose 5-phosphate residues. The sequence is that of Putative endonuclease 4 from Acanthamoeba polyphaga (Amoeba).